We begin with the raw amino-acid sequence, 450 residues long: Na(+)/H(+) antiporter NhaA 1 (450 aa).

11 helical membrane-spanning segments follow: residues 35 to 55 (SSLF…SDYA), 79 to 99 (LKHI…GLEI), 117 to 137 (LIIC…GFNW), 143 to 163 (IGWG…LTMV), 173 to 193 (AFIV…IAIF), 198 to 218 (ISLM…VANY), 224 to 244 (PLFY…SGVH), 320 to 340 (LPVV…VVIN), 356 to 376 (IISG…WFAL), 392 to 412 (VIGA…IATL), and 423 to 443 (VAKT…LLYL).

This sequence belongs to the NhaA Na(+)/H(+) (TC 2.A.33) antiporter family.

The protein localises to the cell inner membrane. It carries out the reaction Na(+)(in) + 2 H(+)(out) = Na(+)(out) + 2 H(+)(in). Its function is as follows. Na(+)/H(+) antiporter that extrudes sodium in exchange for external protons. The polypeptide is Na(+)/H(+) antiporter NhaA 1 (Shewanella denitrificans (strain OS217 / ATCC BAA-1090 / DSM 15013)).